The following is a 61-amino-acid chain: Small ribosomal subunit protein uS14 (61 aa).

Cys24, Cys27, Cys40, and Cys43 together coordinate Zn(2+).

The protein belongs to the universal ribosomal protein uS14 family. Zinc-binding uS14 subfamily. As to quaternary structure, part of the 30S ribosomal subunit. Contacts proteins S3 and S10. Zn(2+) serves as cofactor.

Its function is as follows. Binds 16S rRNA, required for the assembly of 30S particles and may also be responsible for determining the conformation of the 16S rRNA at the A site. The protein is Small ribosomal subunit protein uS14 of Streptococcus equi subsp. zooepidemicus (strain H70).